The following is a 130-amino-acid chain: MADVNRGNRPLSPHLQVYRLPLAAITSIMTRITGHALVAGIVLITWWLVAAVTSPGAFACADWVVRSWLGFIILTGSMWALWYHLLAGLRHLFYDAGYGLEIEQAHKSSQALIAGSVVLAVLTLIVFFVF.

At 1-26 (MADVNRGNRPLSPHLQVYRLPLAAIT) the chain is on the cytoplasmic side. A helical membrane pass occupies residues 27–52 (SIMTRITGHALVAGIVLITWWLVAAV). Residues 53 to 68 (TSPGAFACADWVVRSW) are Periplasmic-facing. Residues 69-89 (LGFIILTGSMWALWYHLLAGL) form a helical membrane-spanning segment. A heme-binding site is contributed by H84. Topologically, residues 90 to 109 (RHLFYDAGYGLEIEQAHKSS) are cytoplasmic. Residues 110–130 (QALIAGSVVLAVLTLIVFFVF) traverse the membrane as a helical segment.

It belongs to the cytochrome b560 family. Part of an enzyme complex containing four subunits: a flavoprotein, an iron-sulfur protein, plus two membrane-anchoring proteins, SdhC and SdhD. The complex can form homotrimers. It depends on heme as a cofactor.

The protein localises to the cell inner membrane. It functions in the pathway carbohydrate metabolism; tricarboxylic acid cycle. Its function is as follows. Membrane-anchoring subunit of succinate dehydrogenase (SDH). The sequence is that of Succinate dehydrogenase cytochrome b556 subunit (sdhC) from Paracoccus denitrificans.